A 498-amino-acid polypeptide reads, in one-letter code: Pup deamidase/depupylase (498 aa).

Residue 6 to 10 coordinates ATP; the sequence is GTEVE. Mg(2+)-binding residues include Glu8 and Tyr93. The active-site Proton acceptor is the Asp95. Glu100 is a Mg(2+) binding site. Residue 102–103 coordinates ATP; it reads SA. His156 provides a ligand contact to Mg(2+). Positions 158 and 240 each coordinate ATP. Residue His242 coordinates Mg(2+).

This sequence belongs to the Pup ligase/Pup deamidase family. Pup deamidase subfamily. ATP is required as a cofactor.

It catalyses the reaction [prokaryotic ubiquitin-like protein]-C-terminal-L-glutamine + H2O = [prokaryotic ubiquitin-like protein]-C-terminal-L-glutamate + NH4(+). It participates in protein degradation; proteasomal Pup-dependent pathway. Functionally, specifically catalyzes the deamidation of the C-terminal glutamine of the prokaryotic ubiquitin-like protein Pup to glutamate, thereby rendering Pup competent for conjugation. Probably also displays depupylase (DPUP) activity, removing conjugated Pup from target proteins; thus may be involved in the recycling of Pup and may function similarly to deubiquitinases (DUBs) in eukaryotes to prevent or promote proteasomal degradation of certain proteins. This chain is Pup deamidase/depupylase (dop), found in Mycolicibacterium smegmatis (strain ATCC 700084 / mc(2)155) (Mycobacterium smegmatis).